Here is a 113-residue protein sequence, read N- to C-terminus: Iron-sulfur cluster insertion protein ErpA (113 aa).

Residues Cys-41, Cys-105, and Cys-107 each coordinate iron-sulfur cluster.

This sequence belongs to the HesB/IscA family. Homodimer. Iron-sulfur cluster is required as a cofactor.

Required for insertion of 4Fe-4S clusters for at least IspG. This Glaesserella parasuis serovar 5 (strain SH0165) (Haemophilus parasuis) protein is Iron-sulfur cluster insertion protein ErpA.